The chain runs to 336 residues: Apyrase (336 aa).

An N-terminal signal peptide occupies residues 1–21; that stretch reads MFLKFCVVAFAICLSINLSEG. The N-linked (GlcNAc...) asparagine glycan is linked to Asn-209.

This sequence belongs to the apyrase family. Ca(2+) is required as a cofactor. Salivary gland (at protein level).

It is found in the secreted. It catalyses the reaction a ribonucleoside 5'-triphosphate + 2 H2O = a ribonucleoside 5'-phosphate + 2 phosphate + 2 H(+). Its function is as follows. Facilitates hematophagy by inhibiting ADP- and collagen-dependent platelet aggregation in the host. Cleaves adenosine triphosphate (ATP) and adenosine diphosphate (ADP) to adenosine monophosphate (AMP) and inorganic phosphate in calcium-dependent manner. In Phlebotomus duboscqi (Sandfly), this protein is Apyrase.